Here is a 612-residue protein sequence, read N- to C-terminus: MIVDNSKDFDLKSFLANLTTHSGVYRMLDKHGEIIYVGKAKNLKNRVNSYFSKGAKDSKTLMMVEQIARIEITITPSDYEAYLLENNLIKQHRPKYNILFKDDKSYPYLVISRDKFPRVSFYRSKSAYKKGQCFGPYVSISSVKNTLNTIQKIFPIRQCENSYYKSRVRPCLQYQIKCCLAPCVGLVSQQQYDEQLAILKKFLAGKFSSVLEEISAKMYQASEDMEYEKAQVYRDQLVVLRKLQQQQIVDIQEDKTFDVIGIYMQDSYASIALLQIQNGDVVADRHWSIDAKGQDKTSIMHAFLSHFYLGDEIRNIWPKNIILSKVEFADITDLMNSISQKIGQAINWIIAPAADNLKWLKLAEVNARQKLNIYTSSKSQYQKRLESLKEFLELEKDIKRIECFDISHFQGEATIASCVVYTDDGEDRKSHRRYNIKDIKSGDDYAAIHQAVSRRVSSGLEADNLPDVMIIDGGKGQIHQAEAVFREYGIQDKVQLVSLGKGIERISGKEKIYKGFDDTEYTLDEHNPGFLLLRQVRDSAHDHAIKGQRKKVSANRQSSIIEEIEGVGPKRRKALMMYFGGWQELSRASVDEIAKVKGISKKLAQEIWECFH.

Positions Thr-20–Ile-98 constitute a GIY-YIG domain. The 36-residue stretch at Ser-208–Leu-243 folds into the UVR domain.

Belongs to the UvrC family. In terms of assembly, interacts with UvrB in an incision complex.

It is found in the cytoplasm. Its function is as follows. The UvrABC repair system catalyzes the recognition and processing of DNA lesions. UvrC both incises the 5' and 3' sides of the lesion. The N-terminal half is responsible for the 3' incision and the C-terminal half is responsible for the 5' incision. In Francisella tularensis subsp. tularensis (strain FSC 198), this protein is UvrABC system protein C.